The sequence spans 443 residues: Tol-Pal system protein TolB (443 aa).

Positions methionine 1 to alanine 33 are cleaved as a signal peptide.

It belongs to the TolB family. The Tol-Pal system is composed of five core proteins: the inner membrane proteins TolA, TolQ and TolR, the periplasmic protein TolB and the outer membrane protein Pal. They form a network linking the inner and outer membranes and the peptidoglycan layer.

Its subcellular location is the periplasm. Part of the Tol-Pal system, which plays a role in outer membrane invagination during cell division and is important for maintaining outer membrane integrity. The chain is Tol-Pal system protein TolB from Brucella canis (strain ATCC 23365 / NCTC 10854 / RM-666).